The following is a 37-amino-acid chain: MSDIN-like toxin proprotein 5 (37 aa).

A propeptide spanning residues 1 to 10 (MSDINATRLP) is cleaved from the precursor. The cyclopeptide (Leu-Pro) cross-link spans 11 to 20 (LFFPPDFRPP). The propeptide occupies 21–37 (CVGDADNFTLTRGENLC).

The protein belongs to the MSDIN fungal toxin family. In terms of processing, processed by the macrocyclase-peptidase enzyme POPB to yield a toxic cyclic decapeptide. POPB first removes 10 residues from the N-terminus. Conformational trapping of the remaining peptide forces the enzyme to release this intermediate rather than proceed to macrocyclization. The enzyme rebinds the remaining peptide in a different conformation and catalyzes macrocyclization of the N-terminal 10 residues. As to expression, expressed in basidiocarps.

In terms of biological role, probable toxin that belongs to the MSDIN-like toxin family responsible for a large number of food poisoning cases and deaths. The polypeptide is MSDIN-like toxin proprotein 5 (Amanita exitialis (Guangzhou destroying angel)).